The primary structure comprises 317 residues: SWI/SNF-related matrix-associated actin-dependent regulator of chromatin subfamily E member 1-related (317 aa).

Residues 1–17 are compositionally biased toward low complexity; sequence MSHGPKQPGAAAAPAGG. Positions 1–71 are disordered; the sequence is MSHGPKQPGA…RKKILPNGPK (71 aa). A Glycyl lysine isopeptide (Lys-Gly) (interchain with G-Cter in SUMO2) cross-link involves residue lysine 31. Positions 31–52 are enriched in basic and acidic residues; it reads KQERGEGPRAGEKGSHEEEPVK. Residues 53–65 are compositionally biased toward basic residues; the sequence is KRGWPKGKKRKKI. The segment at residues 70–138 is a DNA-binding region (HMG box); that stretch reads PKAPVTGYVR…QYMKELRAYQ (69 aa). Serine 160 bears the Phosphoserine mark. Residues 190 to 257 adopt a coiled-coil conformation; that stretch reads EEFLDQNKAR…LQQQLQAVRQ (68 aa).

Component of a BHC histone deacetylase complex that contains HDAC1, HDAC2, HMG20B/BRAF35, KDM1A, RCOR1/CoREST and PHF21A/BHC80. The BHC complex may also contain ZMYM2, ZNF217, ZMYM3, GSE1 and GTF2I. Interacts with the BRCA2 tumor suppressor protein. Interacts with DTNB. Ubiquitously expressed in adult tissues.

The protein localises to the nucleus. It localises to the chromosome. In terms of biological role, required for correct progression through G2 phase of the cell cycle and entry into mitosis. Required for RCOR1/CoREST mediated repression of neuronal specific gene promoters. In Homo sapiens (Human), this protein is SWI/SNF-related matrix-associated actin-dependent regulator of chromatin subfamily E member 1-related (HMG20B).